The sequence spans 374 residues: Probable dual-specificity RNA methyltransferase RlmN (374 aa).

Residues 1–17 show a composition bias toward basic and acidic residues; the sequence is MEKNEISEERRTQEKEK. A disordered region spans residues 1–22; sequence MEKNEISEERRTQEKEKQHGHR. Glu-119 functions as the Proton acceptor in the catalytic mechanism. Residues 125–360 enclose the Radical SAM core domain; that stretch reads SEERITACIS…VTVRKSQGAT (236 aa). A disulfide bridge links Cys-132 with Cys-365. [4Fe-4S] cluster-binding residues include Cys-139, Cys-143, and Cys-146. S-adenosyl-L-methionine-binding positions include 190–191, Ser-223, 246–248, and Asn-322; these read GE and SLH. The active-site S-methylcysteine intermediate is Cys-365.

It belongs to the radical SAM superfamily. RlmN family. [4Fe-4S] cluster serves as cofactor.

Its subcellular location is the cytoplasm. The catalysed reaction is adenosine(2503) in 23S rRNA + 2 reduced [2Fe-2S]-[ferredoxin] + 2 S-adenosyl-L-methionine = 2-methyladenosine(2503) in 23S rRNA + 5'-deoxyadenosine + L-methionine + 2 oxidized [2Fe-2S]-[ferredoxin] + S-adenosyl-L-homocysteine. It catalyses the reaction adenosine(37) in tRNA + 2 reduced [2Fe-2S]-[ferredoxin] + 2 S-adenosyl-L-methionine = 2-methyladenosine(37) in tRNA + 5'-deoxyadenosine + L-methionine + 2 oxidized [2Fe-2S]-[ferredoxin] + S-adenosyl-L-homocysteine. Its function is as follows. Specifically methylates position 2 of adenine 2503 in 23S rRNA and position 2 of adenine 37 in tRNAs. The chain is Probable dual-specificity RNA methyltransferase RlmN from Chlorobaculum tepidum (strain ATCC 49652 / DSM 12025 / NBRC 103806 / TLS) (Chlorobium tepidum).